The chain runs to 178 residues: Endothelin-2 (178 aa).

A signal peptide spans 1-24; that stretch reads MVSVPTTWCSVALALLVALHEGKG. Positions 25–46 are excised as a propeptide; sequence QAAATLEQPASSSHAQGTHLRL. 2 disulfides stabilise this stretch: Cys-49/Cys-63 and Cys-51/Cys-59. Residues 70-178 constitute a propeptide that is removed on maturation; that stretch reads VNTPEQTAPY…RSTHSRWRKR (109 aa). The interval 96 to 111 is endothelin-like; sequence CQCSSARDPACATFCL. The tract at residues 159–178 is disordered; sequence KRQQEAMREPRSTHSRWRKR. A compositionally biased stretch (basic and acidic residues) spans 160-170; the sequence is RQQEAMREPRS.

The protein belongs to the endothelin/sarafotoxin family. As to expression, expressed in lung, but not in placental stem villi vessels or cultured placental villi smooth muscle cells.

It is found in the secreted. Its function is as follows. Endothelins are endothelium-derived vasoconstrictor peptides. The sequence is that of Endothelin-2 (EDN2) from Homo sapiens (Human).